The following is a 293-amino-acid chain: Exosome complex component RRP4 (293 aa).

The 81-residue stretch at 79 to 159 (EVGDIVVGRI…SDGAVSLHTR (81 aa)) folds into the S1 motif domain. S124 carries the phosphoserine modification.

It belongs to the RRP4 family. In terms of assembly, component of the RNA exosome core complex (Exo-9), composed of EXOSC1, EXOSC2, EXOSC3, EXOSC4, EXOSC5, EXOSC6, EXOSC7, EXOSC8 and EXOSC9; within the complex interacts with EXOSC4 and EXOSC7. The catalytically inactive RNA exosome core complex (Exo-9) associates with the catalytic subunit EXOSC10/RRP6. Exo-9 may associate with DIS3 to form the nucleolar exosome complex, or DIS3L to form the cytoplasmic exosome complex. Exo-9 is formed by a hexameric base ring consisting of the heterodimers EXOSC4-EXOSC9, EXOSC5-EXOSC8 and EXOSC6-EXOSC7, and a cap ring consisting of EXOSC1, EXOSC2 and EXOSC3. The RNA exosome complex associates with cofactors C1D/RRP47, MPHOSPH6/MPP6 and MTREX/MTR4. Interacts with GTPBP1. Interacts with ZFP36L1 (via N-terminus).

It localises to the cytoplasm. Its subcellular location is the nucleus. The protein resides in the nucleolus. Non-catalytic component of the RNA exosome complex which has 3'-&gt;5' exoribonuclease activity and participates in a multitude of cellular RNA processing and degradation events. In the nucleus, the RNA exosome complex is involved in proper maturation of stable RNA species such as rRNA, snRNA and snoRNA, in the elimination of RNA processing by-products and non-coding 'pervasive' transcripts, such as antisense RNA species and promoter-upstream transcripts (PROMPTs), and of mRNAs with processing defects, thereby limiting or excluding their export to the cytoplasm. The RNA exosome may be involved in Ig class switch recombination (CSR) and/or Ig variable region somatic hypermutation (SHM) by targeting AICDA deamination activity to transcribed dsDNA substrates. In the cytoplasm, the RNA exosome complex is involved in general mRNA turnover and specifically degrades inherently unstable mRNAs containing AU-rich elements (AREs) within their 3' untranslated regions, and in RNA surveillance pathways, preventing translation of aberrant mRNAs. It seems to be involved in degradation of histone mRNA. The catalytic inactive RNA exosome core complex of 9 subunits (Exo-9) is proposed to play a pivotal role in the binding and presentation of RNA for ribonucleolysis, and to serve as a scaffold for the association with catalytic subunits and accessory proteins or complexes. EXOSC2 as peripheral part of the Exo-9 complex stabilizes the hexameric ring of RNase PH-domain subunits through contacts with EXOSC4 and EXOSC7. The polypeptide is Exosome complex component RRP4 (Homo sapiens (Human)).